The following is a 381-amino-acid chain: Gas vesicle protein C (381 aa).

7 consecutive repeat copies span residues 22–59, 60–84, 85–122, 123–160, 161–192, 193–232, and 233–274. The interval 22–274 is 7 X approximate tandem repeats; that stretch reads QAFAAYADEF…TETEVDIPPI (253 aa). The disordered stretch occupies residues 261 to 333; it reads AVTGTETEVD…EDDQFLDDET (73 aa). The span at 276 to 318 shows a compositional bias: acidic residues; the sequence is DSVEPDGEDEDSKADDVEAEAEVETVEMEFGAEMDTEADEDVQ.

Belongs to the halobacterial gas vesicle GvpC family. Detected as 2 slightly different sizes in vivo; the proteins appears larger in SDS-PAGE probably due to the acidic tail.

It localises to the gas vesicle. Confers stability, involved in shaping gas vesicles (GV), hollow, gas filled proteinaceous nanostructures found in some microorganisms. They allow positioning of halobacteria at the optimal depth for growth in the poorly aerated, shallow brine pools of their habitat. Functionally, expression of a 9.5 kb mc-vac DNA fragment containing 2 divergently transcribed regions (gvpD-gvpE-gvpF-gvpG-gvpH-gvpI-gvpJ-gvpK-gvpL-gvpM and gvpA-gvpC-gvpN-gvpO) allows H.volcanii to produce gas vesicles. The sequence is that of Gas vesicle protein C from Haloferax mediterranei (strain ATCC 33500 / DSM 1411 / JCM 8866 / NBRC 14739 / NCIMB 2177 / R-4) (Halobacterium mediterranei).